A 317-amino-acid polypeptide reads, in one-letter code: Cyclin-dependent kinase 1 (317 aa).

In terms of domain architecture, Protein kinase spans 7-292; that stretch reads YQRQEKVGEG…AKRALIHPYF (286 aa). Residues 13–21 and Lys-37 contribute to the ATP site; that span reads VGEGTYGVV. Thr-17 carries the post-translational modification Phosphothreonine. Residue Tyr-18 is modified to Phosphotyrosine; by SWE1. Catalysis depends on Asp-133, which acts as the Proton acceptor. At Thr-166 the chain carries Phosphothreonine; by CAK. A disordered region spans residues 296–317; that stretch reads DDRDHNNYNEDNIGIDKHQNMQ.

The protein belongs to the protein kinase superfamily. CMGC Ser/Thr protein kinase family. CDC2/CDKX subfamily. As to quaternary structure, forms several complexes with cyclins CCN1, CLB2, CLN3, and HGC1. The CDC28-CCN1 complex associates with septin CDC11 upon hyphal induction. Interacts with IQG1, RFA2, and HSP90. Phosphorylated at Tyr-18 by SWE1 in a cell cycle-dependent manner. Yeast-form and hyphal cells display similar dynamics of phosphorylation and dephosphorylation of Tyr-18. Tyr-18 phosphorylation leads to inhibition of CDC28 kinase activity.

It carries out the reaction L-seryl-[protein] + ATP = O-phospho-L-seryl-[protein] + ADP + H(+). It catalyses the reaction L-threonyl-[protein] + ATP = O-phospho-L-threonyl-[protein] + ADP + H(+). Phosphorylation at Thr-17 or Tyr-18 inactivates the enzyme, while phosphorylation at Thr-166 activates it. In terms of biological role, cyclin-dependent kinase that acts as a master regulator of the mitotic and meiotic cell cycles. May drive the G1-S transition. Plays a role in mitotic exit. Plays a role in the expression of morphology-related transcription factors, and especially hyphae-specific genes. Binds distinct cyclin subunits as cells progress through the division cycle or flamentous growth. The CDC28-CLB2 complex regulates cytokinesis partly by phosphorylating the actomyosin ring component IQG1. The CDC28-CLN3 complex phosphorylates SLA1 which regulates cortical actin patch dynamics. The CDC28-CCN1 complex phosphorylates CDC11 and SEC2 upon induction of filamentous growth. The CDC28-HGC1 complex also phosphorylates SEC2 and maintains CDC11 phosphorylation throughout hyphal growth. Moreover, the CDC28-HGC1 complex phosphorylates and prevents RGA2 from localizing to hyphal tips, leading to localized CDC42 activation for hyphal extension. CDC28-HGC1 phosphorylation of EFG1 represses cell separation genes during hyphal growth. Additional substrates for CDC28 are RFA2 in G1-phase; MOB2, which is required for the maintenance of polarisome components and for inhibition of cell separation in hyphae; and GIN4 to regulate its association to SEP7 and subsequent septin ring assembly. The polypeptide is Cyclin-dependent kinase 1 (Candida albicans (strain SC5314 / ATCC MYA-2876) (Yeast)).